The primary structure comprises 809 residues: Ribonuclease Z 1 (809 aa).

A disordered region spans residues 74-93 (ISSPDTYDSSSSSSTTSVSD).

It belongs to the RNase Z family. It depends on Zn(2+) as a cofactor.

The protein localises to the nucleus. It localises to the cytoplasm. It catalyses the reaction Endonucleolytic cleavage of RNA, removing extra 3' nucleotides from tRNA precursor, generating 3' termini of tRNAs. A 3'-hydroxy group is left at the tRNA terminus and a 5'-phosphoryl group is left at the trailer molecule.. Its function is as follows. Zinc phosphodiesterase, which displays some tRNA 3'-processing endonuclease activity. May be involved in tRNA maturation, by removing a 3'-trailer from precursor tRNA. In Schizosaccharomyces pombe (strain 972 / ATCC 24843) (Fission yeast), this protein is Ribonuclease Z 1 (trz1).